The sequence spans 444 residues: UDP-N-acetylmuramate--L-alanine ligase (444 aa).

Position 110–116 (110–116 (GAHGKTS)) interacts with ATP.

The protein belongs to the MurCDEF family. In terms of processing, phosphorylated by StkP in vitro. Dephosphorylated by PhpP in vitro.

It localises to the cytoplasm. The catalysed reaction is UDP-N-acetyl-alpha-D-muramate + L-alanine + ATP = UDP-N-acetyl-alpha-D-muramoyl-L-alanine + ADP + phosphate + H(+). It functions in the pathway cell wall biogenesis; peptidoglycan biosynthesis. In terms of biological role, cell wall formation. The sequence is that of UDP-N-acetylmuramate--L-alanine ligase from Streptococcus pneumoniae serotype 4 (strain ATCC BAA-334 / TIGR4).